A 103-amino-acid polypeptide reads, in one-letter code: ATP synthase F(0) complex subunit g, mitochondrial (103 aa).

Ala-2 is subject to N-acetylalanine. An N6-acetyllysine mark is found at Lys-11, Lys-24, Lys-35, and Lys-54.

It belongs to the ATPase g subunit family. As to quaternary structure, component of the ATP synthase complex composed at least of ATP5F1A/subunit alpha, ATP5F1B/subunit beta, ATP5MC1/subunit c (homooctomer), MT-ATP6/subunit a, MT-ATP8/subunit 8, ATP5ME/subunit e, ATP5MF/subunit f, ATP5MG/subunit g, ATP5MK/subunit k, ATP5MJ/subunit j, ATP5F1C/subunit gamma, ATP5F1D/subunit delta, ATP5F1E/subunit epsilon, ATP5PF/subunit F6, ATP5PB/subunit b, ATP5PD/subunit d, ATP5PO/subunit OSCP. ATP synthase complex consists of a soluble F(1) head domain (subunits alpha(3) and beta(3)) - the catalytic core - and a membrane F(0) domain - the membrane proton channel (subunits c, a, 8, e, f, g, k and j). These two domains are linked by a central stalk (subunits gamma, delta, and epsilon) rotating inside the F1 region and a stationary peripheral stalk (subunits F6, b, d, and OSCP).

It localises to the mitochondrion. Its subcellular location is the mitochondrion inner membrane. In terms of biological role, subunit g, of the mitochondrial membrane ATP synthase complex (F(1)F(0) ATP synthase or Complex V) that produces ATP from ADP in the presence of a proton gradient across the membrane which is generated by electron transport complexes of the respiratory chain. ATP synthase complex consist of a soluble F(1) head domain - the catalytic core - and a membrane F(1) domain - the membrane proton channel. These two domains are linked by a central stalk rotating inside the F(1) region and a stationary peripheral stalk. During catalysis, ATP synthesis in the catalytic domain of F(1) is coupled via a rotary mechanism of the central stalk subunits to proton translocation. In vivo, can only synthesize ATP although its ATP hydrolase activity can be activated artificially in vitro. Part of the complex F(0) domain. This Pongo abelii (Sumatran orangutan) protein is ATP synthase F(0) complex subunit g, mitochondrial.